The sequence spans 417 residues: MTYIEILGQNAKKASQSVARLSTASKNEILRDLARNIVADTETILTENARDVAKAKDNGISEIMVDRLRLNKDRIQAIANGIYQVADLADPIGQVVSGYTNLDGLKILKKRVPLGVIAMIFESRPNVSVDAFSLAFKTGNAIILRGGKDAIFSNTALVNCMRQTLQDTGHNPDIVQLVEDTSHVVAEELMQATDYVDVLIPRGGAKLIQTVKEKSKIPVIETGVGNVHIYIDEFADLDMAAKIVINAKTQRPSVCNAAEGLVVHQAIAKGFLSQLEKMLKESNQSVEFRADEEALQLLENAVAASESDYATEFLDYIMSVKVVDSFEQAISWINKYSSHHSEAIITNNISRAEIFQDMVDAAAVYVNASTRFTDGFVFGLGAEIGISTQKLHARGPMGLEALTSTKYYINGTGQVRE.

Belongs to the gamma-glutamyl phosphate reductase family.

It localises to the cytoplasm. The enzyme catalyses L-glutamate 5-semialdehyde + phosphate + NADP(+) = L-glutamyl 5-phosphate + NADPH + H(+). It participates in amino-acid biosynthesis; L-proline biosynthesis; L-glutamate 5-semialdehyde from L-glutamate: step 2/2. Functionally, catalyzes the NADPH-dependent reduction of L-glutamate 5-phosphate into L-glutamate 5-semialdehyde and phosphate. The product spontaneously undergoes cyclization to form 1-pyrroline-5-carboxylate. The polypeptide is Gamma-glutamyl phosphate reductase (Streptococcus agalactiae serotype III (strain NEM316)).